The following is a 239-amino-acid chain: Putative HTH-type transcriptional regulator YkgA (239 aa).

Positions 19-117 (QQLLEWIECN…GCSPREYRHR (99 aa)) constitute an HTH araC/xylS-type domain. 2 consecutive DNA-binding regions (H-T-H motif) follow at residues 36–57 (EDIA…RNFM) and 84–107 (MLDI…KKLF).

The protein is Putative HTH-type transcriptional regulator YkgA (ykgA) of Escherichia coli (strain K12).